The primary structure comprises 622 residues: Chaperone protein HscA homolog (622 aa).

It belongs to the heat shock protein 70 family.

Its function is as follows. Chaperone involved in the maturation of iron-sulfur cluster-containing proteins. Has a low intrinsic ATPase activity which is markedly stimulated by HscB. In Burkholderia ambifaria (strain MC40-6), this protein is Chaperone protein HscA homolog.